We begin with the raw amino-acid sequence, 313 residues long: MADPYEFLMCIHDPEEDTLTRNFPIPATPLDQNTKDISLNLDRKTSLRIFRPPTEEFCVTTNKLLPIIIYFHGGGFVLFNADSTINHDFCQSIATHLPALVVSVDYRLAPENRLPAAYDDAVDALNWVKDQGLGKLNNSEVWLKEYGDFSKCFIMGCSSGGNIAYHASLRAIEMDLEPVIINGLILHSPFFGSLQRTESDLKVINDQDLPLAVRDVMWELALPLGSSRDHVYCNPNIANDGSSSGNMAGLIKRCLVIGFYGDPLIDRQIQLVKMLEEKGVKVETWIEQEGYHGVPCFDPKIRETLLGKIKYFI.

An Involved in the stabilization of the negatively charged intermediate by the formation of the oxyanion hole motif is present at residues 72-74; sequence HGG. Catalysis depends on residues serine 158, aspartate 262, and histidine 292.

The protein belongs to the 'GDXG' lipolytic enzyme family.

The enzyme catalyses 3-O-acetylpapaveroxine + H2O = narcotine hemiacetal + acetate + H(+). Its pathway is alkaloid biosynthesis. In terms of biological role, carboxylesterase involved in the biosynthesis of the benzylisoquinoline alkaloid noscapine. Converts 3-O-acetylpapaveroxine to narcotine hemiacetal. The protein is 3-O-acetylpapaveroxine carboxylesterase CXE2 of Papaver somniferum (Opium poppy).